We begin with the raw amino-acid sequence, 300 residues long: C-4 methylsterol oxidase erg25 (300 aa).

The 137-residue stretch at 140–276 (TLFFFLEDTW…FRWWDAVLKT (137 aa)) folds into the Fatty acid hydroxylase domain. Residues 154 to 158 (HRLFH) carry the Histidine box-1 motif. Residues 167-171 (HKVHH) carry the Histidine box-2 motif. A helical transmembrane segment spans residues 186 to 206 (PLEIILLGAGTVFVPLMWCYF). The Histidine box-3 signature appears at 251-257 (HHDYHHM).

This sequence belongs to the sterol desaturase family. As to quaternary structure, heterotetramer of erg25, erg26, erg27 and erg28. Erg28 acts as a scaffold to tether erg27 and other 4,4-demethylation-related enzymes, forming a demethylation enzyme complex, in the endoplasmic reticulum. Requires Fe cation as cofactor.

It localises to the endoplasmic reticulum membrane. The catalysed reaction is 4,4-dimethyl-5alpha-cholesta-8,24-dien-3beta-ol + 6 Fe(II)-[cytochrome b5] + 3 O2 + 5 H(+) = 4beta-methylzymosterol-4alpha-carboxylate + 6 Fe(III)-[cytochrome b5] + 4 H2O. It carries out the reaction 4alpha-methylzymosterol + 6 Fe(II)-[cytochrome b5] + 3 O2 + 5 H(+) = 4alpha-carboxyzymosterol + 6 Fe(III)-[cytochrome b5] + 4 H2O. Its pathway is steroid biosynthesis; zymosterol biosynthesis; zymosterol from lanosterol: step 3/6. It functions in the pathway steroid metabolism; ergosterol biosynthesis. C-4 methylsterol oxidase; part of the third module of ergosterol biosynthesis pathway that includes by the late steps of the pathway. Erg25 is a catalytic component of the C-4 demethylation complex that catalyzes the three-step monooxygenation required for the demethylation of 4,4-dimethyl and 4alpha-methylsterols. The third module or late pathway involves the ergosterol synthesis itself through consecutive reactions that mainly occur in the endoplasmic reticulum (ER) membrane. Firstly, the squalene synthase erg9 catalyzes the condensation of 2 farnesyl pyrophosphate moieties to form squalene, which is the precursor of all steroids. Secondly, squalene is converted into lanosterol by the consecutive action of the squalene epoxidase erg1 and the lanosterol synthase erg7. The lanosterol 14-alpha-demethylase erg11/cyp1 catalyzes C14-demethylation of lanosterol to produce 4,4'-dimethyl cholesta-8,14,24-triene-3-beta-ol. In the next steps, a complex process involving various demethylation, reduction and desaturation reactions catalyzed by the C-14 reductase erg24 and the C-4 demethylation complex erg25-erg26-erg27 leads to the production of zymosterol. Erg28 likely functions in the C-4 demethylation complex reaction by tethering erg26 and Erg27 to the endoplasmic reticulum or to facilitate interaction between these proteins. Then, the sterol 24-C-methyltransferase erg6 catalyzes the methyl transfer from S-adenosyl-methionine to the C-24 of zymosterol to form fecosterol. The C-8 sterol isomerase erg2 catalyzes the reaction which results in unsaturation at C-7 in the B ring of sterols and thus converts fecosterol to episterol. The sterol-C5-desaturases erg31 and erg32 then catalyze the introduction of a C-5 double bond in the B ring to produce 5-dehydroepisterol. The C-22 sterol desaturase erg5 further converts 5-dehydroepisterol into ergosta-5,7,22,24(28)-tetraen-3beta-ol by forming the C-22(23) double bond in the sterol side chain. Finally, ergosta-5,7,22,24(28)-tetraen-3beta-ol is substrate of the C-24(28) sterol reductase erg4 to produce ergosterol. In the genus Schizosaccharomyces, a second route exists between lanosterol and fecosterol, via the methylation of lanosterol to eburicol by erg6, followed by C14-demethylation by erg11/cyp1 and C4-demethylation by the demethylation complex erg25-erg26-erg27. This is C-4 methylsterol oxidase erg25 from Schizosaccharomyces pombe (strain 972 / ATCC 24843) (Fission yeast).